The chain runs to 154 residues: MGNHCTRIPCCKKVCSCICCCNRRNKTQARSQKGSYFIKGKVHPVSRMEKWEEKITEANSHGKILVVNFKASWCLPSKTILPIYQELASTYTSMIFVTIDVEELAEFSHEWNVDATPTVVFLKDGRQMDKLVGGDAAELQKKTAAAANLLLRQS.

The Thioredoxin domain occupies 23–148 (RRNKTQARSQ…LQKKTAAAAN (126 aa)). Position 31 is a phosphoserine (S31).

This sequence belongs to the thioredoxin family. Ubiquitous.

It localises to the cytoplasm. In terms of biological role, possesses low disulfide reductase activity, but efficient protein disulfide isomerase activity. Does not possess deglutathionylation activity. The sequence is that of Thioredoxin-like protein CXXS2 (CXXS2) from Arabidopsis thaliana (Mouse-ear cress).